Here is a 345-residue protein sequence, read N- to C-terminus: Peptidoglycan-recognition protein LE (345 aa).

Over residues 1–16 (MSESGIKKLSQERTRE) the composition is skewed to basic and acidic residues. Positions 1-38 (MSESGIKKLSQERTREWLASQEDEELESIAESSVVDSL) are disordered. 4 N-linked (GlcNAc...) asparagine glycosylation sites follow: Asn52, Asn95, Asn98, and Asn106. Residues 124-152 (NRRDRRHVSPPRDNAPKTPTHFEDDYQDE) are disordered. Residues 198–324 (PVKYVVILHT…CQCNSTESPG (127 aa)) form the N-acetylmuramoyl-L-alanine amidase domain. Peptidoglycan is bound by residues His206, 229–240 (HIESRGWNDIAY), Arg254, 261–267 (AHTLGYN), and 314–322 (HCQCNSTES). Asn318 is a glycosylation site (N-linked (GlcNAc...) asparagine).

The protein belongs to the N-acetylmuramoyl-L-alanine amidase 2 family. Monomer. Peptidoglycan binding induces oligomerization. As to expression, expressed in hemolymph. Localizes at the lumenal surface of the trachea (at protein level).

It localises to the secreted. Its function is as follows. Peptidoglycan-recognition protein that plays a key role in innate immunity by binding to murein peptidoglycans (PGN) of Gram-negative bacteria and activating the imd/Relish pathway. Has no activity against on Gram-positive bacteria. Binds to diaminopimelic acid-type PGN (DAP-type PGN), an activator of the imd/Relish pathway. Functions synergistically with PGRP-LC in producing resistance to E.coli and B.megaterium infections, which have the DAP-type peptidoglycan. Acts both upstream and in parallel with PGRP-LC in the imd/Relish pathway, and is required for infection-dependent activation of melanization. Required for Relish processing and nuclear translocation following proteolytic cleavage. Its localization suggests a role in the recognition and subsequent activation of the signaling at the first point of contact with invading bacteria. The protein is Peptidoglycan-recognition protein LE (PGRP-LE) of Drosophila melanogaster (Fruit fly).